Consider the following 372-residue polypeptide: tRNA-specific 2-thiouridylase MnmA (372 aa).

ATP is bound by residues 16-23 and methionine 42; that span reads GMSGGVDS. The interval 102–104 is interaction with target base in tRNA; it reads NPD. The active-site Nucleophile is cysteine 107. A disulfide bridge connects residues cysteine 107 and cysteine 205. Glycine 132 serves as a coordination point for ATP. The interval 155 to 157 is interaction with tRNA; that stretch reads KDQ. Cysteine 205 functions as the Cysteine persulfide intermediate in the catalytic mechanism. Positions 317–318 are interaction with tRNA; that stretch reads RY.

The protein belongs to the MnmA/TRMU family.

Its subcellular location is the cytoplasm. It catalyses the reaction S-sulfanyl-L-cysteinyl-[protein] + uridine(34) in tRNA + AH2 + ATP = 2-thiouridine(34) in tRNA + L-cysteinyl-[protein] + A + AMP + diphosphate + H(+). Functionally, catalyzes the 2-thiolation of uridine at the wobble position (U34) of tRNA, leading to the formation of s(2)U34. This Shewanella denitrificans (strain OS217 / ATCC BAA-1090 / DSM 15013) protein is tRNA-specific 2-thiouridylase MnmA.